Here is a 114-residue protein sequence, read N- to C-terminus: Ferredoxin (114 aa).

Cys-9 and Cys-17 together coordinate [3Fe-4S] cluster. Residues Cys-21, Cys-40, Cys-43, and Cys-46 each contribute to the [4Fe-4S] cluster site. The 4Fe-4S ferredoxin-type domain maps to 31 to 60 (RMLYINPDECVDCGACKPACRVEAIYWEGD). Cys-50 provides a ligand contact to [3Fe-4S] cluster.

It depends on [4Fe-4S] cluster as a cofactor. The cofactor is [3Fe-4S] cluster.

Ferredoxins are iron-sulfur proteins that transfer electrons in a wide variety of metabolic reactions. The protein is Ferredoxin (fdxA) of Mycobacterium tuberculosis (strain ATCC 25618 / H37Rv).